The primary structure comprises 250 residues: 2-(R)-hydroxypropyl-CoM dehydrogenase (250 aa).

NAD(+) is bound by residues serine 12–asparagine 14, aspartate 33, aspartate 60–valine 61, and asparagine 87. Arginine 152 is a 2-oxopropyl-coenzyme M binding site. Tyrosine 155 (proton acceptor) is an active-site residue. Residue isoleucine 188–methionine 192 participates in NAD(+) binding. Tryptophan 195 to arginine 196 contacts 2-oxopropyl-coenzyme M.

It belongs to the short-chain dehydrogenases/reductases (SDR) family. In terms of assembly, homodimer in solution. Homotetramer. Component III of the aliphatic epoxide carboxylation complex together with components I, II and IV.

The enzyme catalyses (R)-2-hydroxypropyl-coenzyme M + NAD(+) = 2-oxopropyl-coenzyme M + NADH + H(+). It participates in alkene metabolism; propylene degradation. Inhibited by the arginine-specific modifiers 2,3-butanedione and phenylglyoxal. 2-(2-methyl-2-hydroxypropylthio)ethanesulfonate (M-HPC), an achiral analog of both R-HPC and S-HPC, and (2S)-2-hydroxypropyl-coenzyme M (S-HPC) are competitive inhibitors. Inhibited (at 70%) by the coenzyme M analog 2-bromoethanesulfonate (BES). Functionally, involved in aliphatic epoxide carboxylation. Catalyzes the reversible oxidation of (R)-2-hydroxypropyl-coenzyme M (R-HPC) to 2-oxopropyl-coenzyme M (2-KPC). The enzyme is highly specific for the R enantiomers. In vitro can also use achiral 2-propanol and short-chain (R)- and (S)-2-alkanols. The sequence is that of 2-(R)-hydroxypropyl-CoM dehydrogenase from Xanthobacter autotrophicus (strain ATCC BAA-1158 / Py2).